An 82-amino-acid chain; its full sequence is Putative membrane protein insertion efficiency factor (82 aa).

This sequence belongs to the UPF0161 family.

The protein resides in the cell inner membrane. In terms of biological role, could be involved in insertion of integral membrane proteins into the membrane. The polypeptide is Putative membrane protein insertion efficiency factor (Aeromonas salmonicida (strain A449)).